A 171-amino-acid polypeptide reads, in one-letter code: 3-hydroxydecanoyl-[acyl-carrier-protein] dehydratase (171 aa).

His-70 is a catalytic residue.

Belongs to the thioester dehydratase family. FabA subfamily. As to quaternary structure, homodimer.

It localises to the cytoplasm. It catalyses the reaction a (3R)-hydroxyacyl-[ACP] = a (2E)-enoyl-[ACP] + H2O. The catalysed reaction is (3R)-hydroxydecanoyl-[ACP] = (2E)-decenoyl-[ACP] + H2O. It carries out the reaction (2E)-decenoyl-[ACP] = (3Z)-decenoyl-[ACP]. It functions in the pathway lipid metabolism; fatty acid biosynthesis. Functionally, necessary for the introduction of cis unsaturation into fatty acids. Catalyzes the dehydration of (3R)-3-hydroxydecanoyl-ACP to E-(2)-decenoyl-ACP and then its isomerization to Z-(3)-decenoyl-ACP. Can catalyze the dehydratase reaction for beta-hydroxyacyl-ACPs with saturated chain lengths up to 16:0, being most active on intermediate chain length. In Histophilus somni (strain 129Pt) (Haemophilus somnus), this protein is 3-hydroxydecanoyl-[acyl-carrier-protein] dehydratase.